The primary structure comprises 391 residues: S-adenosylmethionine synthase 1 (391 aa).

Glutamate 9 is a Mg(2+) binding site. Histidine 15 contributes to the ATP binding site. Glutamate 43 lines the K(+) pocket. L-methionine-binding residues include glutamate 56 and glutamine 99. ATP is bound by residues 167–169 (DGK), 235–238 (SGRF), aspartate 246, 252–253 (RK), alanine 269, lysine 273, and lysine 277. Aspartate 246 is an L-methionine binding site. L-methionine is bound at residue lysine 277.

Belongs to the AdoMet synthase family. Homotetramer. It depends on Mn(2+) as a cofactor. The cofactor is Mg(2+). Co(2+) is required as a cofactor. Requires K(+) as cofactor.

The protein resides in the cytoplasm. It catalyses the reaction L-methionine + ATP + H2O = S-adenosyl-L-methionine + phosphate + diphosphate. It functions in the pathway amino-acid biosynthesis; S-adenosyl-L-methionine biosynthesis; S-adenosyl-L-methionine from L-methionine: step 1/1. In terms of biological role, catalyzes the formation of S-adenosylmethionine from methionine and ATP. The reaction comprises two steps that are both catalyzed by the same enzyme: formation of S-adenosylmethionine (AdoMet) and triphosphate, and subsequent hydrolysis of the triphosphate. This Vitis vinifera (Grape) protein is S-adenosylmethionine synthase 1 (METK1).